The primary structure comprises 159 residues: Ecotin (159 aa).

Residues 1–22 form the signal peptide; the sequence is MRPTPMTAILALTLAAAAPAMA. Residues cysteine 68 and cysteine 105 are joined by a disulfide bond.

This sequence belongs to the protease inhibitor I11 (ecotin) family. Homodimer.

The protein resides in the periplasm. In terms of biological role, general inhibitor of family S1 serine proteases. The protein is Ecotin of Pseudomonas putida (strain GB-1).